Here is a 358-residue protein sequence, read N- to C-terminus: DNA polymerase IV (358 aa).

A UmuC domain is found at 4-185 (IIHIDMDCYF…LSLRKIPGVG (182 aa)). Residues aspartate 8 and aspartate 103 each coordinate Mg(2+). Glutamate 104 is an active-site residue.

Belongs to the DNA polymerase type-Y family. Monomer. Requires Mg(2+) as cofactor.

Its subcellular location is the cytoplasm. It catalyses the reaction DNA(n) + a 2'-deoxyribonucleoside 5'-triphosphate = DNA(n+1) + diphosphate. Its function is as follows. Poorly processive, error-prone DNA polymerase involved in untargeted mutagenesis. Copies undamaged DNA at stalled replication forks, which arise in vivo from mismatched or misaligned primer ends. These misaligned primers can be extended by PolIV. Exhibits no 3'-5' exonuclease (proofreading) activity. May be involved in translesional synthesis, in conjunction with the beta clamp from PolIII. The chain is DNA polymerase IV from Shewanella baltica (strain OS155 / ATCC BAA-1091).